The following is a 238-amino-acid chain: Auxin-responsive protein IAA2 (238 aa).

The EAR-like (transcriptional repression) signature appears at Leu-24–Leu-28. 3 stretches are compositionally biased toward low complexity: residues Ser-33 to Ser-44, Ala-59 to Ala-69, and Ala-85 to Gln-94. Disordered stretches follow at residues Ser-33 to Ala-69 and Arg-82 to Gly-114. The 99-residue stretch at Gly-118 to Ser-216 folds into the PB1 domain. The interval Ser-217–Ser-238 is disordered. Positions Gly-229–Ser-238 are enriched in basic residues.

The protein belongs to the Aux/IAA family. As to quaternary structure, homodimers and heterodimers. In terms of tissue distribution, highly expressed in flowers.

The protein resides in the nucleus. Aux/IAA proteins are short-lived transcriptional factors that function as repressors of early auxin response genes at low auxin concentrations. This is Auxin-responsive protein IAA2 (IAA2) from Oryza sativa subsp. japonica (Rice).